The following is a 596-amino-acid chain: Elongation factor 4 (596 aa).

Positions 2 to 184 constitute a tr-type G domain; it reads KHIRNFSIIA…MIVKDVPPPV (183 aa). Residues 14 to 19 and 131 to 134 contribute to the GTP site; these read DHGKST and NKID.

This sequence belongs to the TRAFAC class translation factor GTPase superfamily. Classic translation factor GTPase family. LepA subfamily.

The protein resides in the cell inner membrane. The enzyme catalyses GTP + H2O = GDP + phosphate + H(+). In terms of biological role, required for accurate and efficient protein synthesis under certain stress conditions. May act as a fidelity factor of the translation reaction, by catalyzing a one-codon backward translocation of tRNAs on improperly translocated ribosomes. Back-translocation proceeds from a post-translocation (POST) complex to a pre-translocation (PRE) complex, thus giving elongation factor G a second chance to translocate the tRNAs correctly. Binds to ribosomes in a GTP-dependent manner. The sequence is that of Elongation factor 4 from Pseudoalteromonas translucida (strain TAC 125).